The primary structure comprises 314 residues: Pantothenate synthetase (314 aa).

43-50 (MGALHEGH) is an ATP binding site. The active-site Proton donor is the His-50. Gln-75 contributes to the (R)-pantoate binding site. Residue Gln-75 participates in beta-alanine binding. A disordered region spans residues 112 to 131 (MYPDGTRTSVHPGPLGDDLE). 161-164 (GEKD) lines the ATP pocket. Gln-167 is a (R)-pantoate binding site. ATP-binding positions include Val-190 and 198–201 (LSSR).

The protein belongs to the pantothenate synthetase family. As to quaternary structure, homodimer.

The protein resides in the cytoplasm. The enzyme catalyses (R)-pantoate + beta-alanine + ATP = (R)-pantothenate + AMP + diphosphate + H(+). Its pathway is cofactor biosynthesis; (R)-pantothenate biosynthesis; (R)-pantothenate from (R)-pantoate and beta-alanine: step 1/1. Its function is as follows. Catalyzes the condensation of pantoate with beta-alanine in an ATP-dependent reaction via a pantoyl-adenylate intermediate. This is Pantothenate synthetase from Mycolicibacterium smegmatis (strain ATCC 700084 / mc(2)155) (Mycobacterium smegmatis).